The chain runs to 412 residues: MDTIIHNTTNRSTDTPHVNITCNITEPLSAIRTTEAVINTFIIFVGGPLNAIVLITQLLTNRVLGYSTPTIYMTNLYSTNFLTLTVLPFIVLSNQWLLPASVASCKFLSVIYYSSCTVGFATVALIAADRYRVLHKRTYARQSYRSTYIILLLTWFAGLIFSMPAAVYTTVVIHNGTNGQSSNGHATCVLYFIADEVYTVLLSWKVLLTLVWGAAPVIMMTWFYAFFYSTVQRASQKQRSRTLTFVSVLLISFVALQTPYVSIMIFNSYATAAWPMDCEHLTLRRTIGTLSRLVPHLHCLINPILYALLGHDFLQRMRQCFRGQLLDRRAFLRSQQNQRATAETNLAAGNNSQSVATSLDTSSKNCNQHAKRSVSFNFPSGTWKGGQKTASNDTSTKIPHRLSQSHHNLSGV.

Residues 1-35 lie on the Virion surface side of the membrane; that stretch reads MDTIIHNTTNRSTDTPHVNITCNITEPLSAIRTTE. N7, N19, and N23 each carry an N-linked (GlcNAc...) asparagine; by host glycan. Residues 36-56 form a helical membrane-spanning segment; it reads AVINTFIIFVGGPLNAIVLIT. Over 57 to 80 the chain is Intravirion; it reads QLLTNRVLGYSTPTIYMTNLYSTN. Residues 81 to 101 traverse the membrane as a helical segment; that stretch reads FLTLTVLPFIVLSNQWLLPAS. Residues 102 to 106 are Virion surface-facing; sequence VASCK. A disulfide bond links C105 and C188. A helical transmembrane segment spans residues 107–127; sequence FLSVIYYSSCTVGFATVALIA. Residues 128 to 147 lie on the Intravirion side of the membrane; the sequence is ADRYRVLHKRTYARQSYRST. The helical transmembrane segment at 148–168 threads the bilayer; that stretch reads YIILLLTWFAGLIFSMPAAVY. At 169-206 the chain is on the virion surface side; it reads TTVVIHNGTNGQSSNGHATCVLYFIADEVYTVLLSWKV. The chain crosses the membrane as a helical span at residues 207-227; that stretch reads LLTLVWGAAPVIMMTWFYAFF. Topologically, residues 228 to 244 are intravirion; sequence YSTVQRASQKQRSRTLT. A helical membrane pass occupies residues 245–265; that stretch reads FVSVLLISFVALQTPYVSIMI. Residues 266–292 are Virion surface-facing; it reads FNSYATAAWPMDCEHLTLRRTIGTLSR. A helical transmembrane segment spans residues 293–313; sequence LVPHLHCLINPILYALLGHDF. The Intravirion segment spans residues 314–412; that stretch reads LQRMRQCFRG…SQSHHNLSGV (99 aa). Residues 377–412 form a disordered region; the sequence is NFPSGTWKGGQKTASNDTSTKIPHRLSQSHHNLSGV. Over residues 388 to 397 the composition is skewed to polar residues; the sequence is KTASNDTSTK.

It belongs to the G-protein coupled receptor 1 family. In terms of assembly, heterodimerizes with US28.

It localises to the virion. Its subcellular location is the host cell membrane. The protein localises to the host cytoplasm. Functionally, G-protein-coupled receptor (vGPCR) that constitutively activates multiple oncogenic signaling pathways including STAT3, AP-1, phospholipase C, NF-kappa-B or cAMP-responsive element (CRE) pathways. Plays an important role in viral reactivation from latency through activation of host CREB1, facilitating its recruitment to the viral major immediate early (MIE) genes. In turn, expression of the MIE-driven genes such as UL123 are de-repressed. Also facilitates virus dissemination via the extracellular and cell-to-cell route. In Human cytomegalovirus (strain Merlin) (HHV-5), this protein is G-protein coupled receptor homolog UL33 (UL33).